The following is a 333-amino-acid chain: NADH-quinone oxidoreductase subunit H (333 aa).

The next 8 membrane-spanning stretches (helical) occupy residues 15 to 35 (FFIF…FVTY), 88 to 108 (FILA…VIPF), 117 to 137 (IGVG…GVVT), 159 to 179 (ISYE…AGSL), 191 to 211 (VWYI…AVAE), 239 to 259 (WAFF…LITV), 274 to 296 (IPGA…WFRV), and 313 to 333 (VLLP…ELFF).

It belongs to the complex I subunit 1 family. As to quaternary structure, NDH-1 is composed of 14 different subunits. Subunits NuoA, H, J, K, L, M, N constitute the membrane sector of the complex.

Its subcellular location is the cell membrane. The catalysed reaction is a quinone + NADH + 5 H(+)(in) = a quinol + NAD(+) + 4 H(+)(out). NDH-1 shuttles electrons from NADH, via FMN and iron-sulfur (Fe-S) centers, to quinones in the respiratory chain. The immediate electron acceptor for the enzyme in this species is believed to be ubiquinone. Couples the redox reaction to proton translocation (for every two electrons transferred, four hydrogen ions are translocated across the cytoplasmic membrane), and thus conserves the redox energy in a proton gradient. This subunit may bind ubiquinone. The chain is NADH-quinone oxidoreductase subunit H from Bacillus cereus (strain G9842).